The primary structure comprises 187 residues: MDLKNHFLVAMPSMNDPVFTRSVIYICEHDSDGTMGLRINQPVQISLKGMLDQIKLDNPSPIIFPQTLSQPVLNGGPVSDDRGFVLHYPKDNYSSSIEVTEELSVTTSKDILATLGTEDQPYKYLVALGYSGWDAGQLEQELSENTWLILEADSSVIFDTPIPDRWRRAIEILGISPVNISSEVGHA.

Belongs to the UPF0301 (AlgH) family.

The sequence is that of UPF0301 protein VSAL_I0547 from Aliivibrio salmonicida (strain LFI1238) (Vibrio salmonicida (strain LFI1238)).